A 257-amino-acid polypeptide reads, in one-letter code: Hydroxyacylglutathione hydrolase (257 aa).

His-54, His-56, Asp-58, His-59, His-113, Asp-137, and His-175 together coordinate Zn(2+).

This sequence belongs to the metallo-beta-lactamase superfamily. Glyoxalase II family. In terms of assembly, monomer. The cofactor is Zn(2+).

The catalysed reaction is an S-(2-hydroxyacyl)glutathione + H2O = a 2-hydroxy carboxylate + glutathione + H(+). It participates in secondary metabolite metabolism; methylglyoxal degradation; (R)-lactate from methylglyoxal: step 2/2. In terms of biological role, thiolesterase that catalyzes the hydrolysis of S-D-lactoyl-glutathione to form glutathione and D-lactic acid. The sequence is that of Hydroxyacylglutathione hydrolase from Trichodesmium erythraeum (strain IMS101).